The primary structure comprises 315 residues: Deoxyhypusine hydroxylase (315 aa).

6 HEAT-like PBS-type repeats span residues 23–52 (IAKR…LNDK), 56–82 (LRHE…LVKN), 89–115 (VRHE…YSND), 179–205 (NRYR…GLKD), 211–237 (LRHE…CVLD), and 244–270 (VRHE…LLQD). Fe cation-binding residues include histidine 58, histidine 91, and glutamate 92. 3 residues coordinate Fe cation: histidine 213, histidine 246, and glutamate 247.

This sequence belongs to the deoxyhypusine hydroxylase family. It depends on Fe(2+) as a cofactor.

The catalysed reaction is [eIF5A protein]-deoxyhypusine + AH2 + O2 = [eIF5A protein]-hypusine + A + H2O. It functions in the pathway protein modification; eIF5A hypusination. Its function is as follows. Catalyzes the hydroxylation of the N(6)-(4-aminobutyl)-L-lysine intermediate produced by deoxyhypusine synthase/DHPS on a critical lysine of the eukaryotic translation initiation factor 5A/eIF-5A. This is the second step of the post-translational modification of that lysine into an unusual amino acid residue named hypusine. Hypusination is unique to mature eIF-5A factor and is essential for its function. The chain is Deoxyhypusine hydroxylase (dohh-1) from Dictyostelium discoideum (Social amoeba).